A 134-amino-acid polypeptide reads, in one-letter code: uncharacterized protein (134 aa).

A run of 3 helical transmembrane segments spans residues Pro9–Ala29, Met49–Phe69, and Ala107–Leu127.

Belongs to the DoxX family.

Its subcellular location is the cell membrane. This is an uncharacterized protein from Haemophilus influenzae (strain ATCC 51907 / DSM 11121 / KW20 / Rd).